A 483-amino-acid chain; its full sequence is Glutamyl-tRNA(Gln) amidotransferase subunit A (483 aa).

Catalysis depends on charge relay system residues Lys-77 and Ser-152. Ser-176 acts as the Acyl-ester intermediate in catalysis.

The protein belongs to the amidase family. GatA subfamily. Heterotrimer of A, B and C subunits.

It carries out the reaction L-glutamyl-tRNA(Gln) + L-glutamine + ATP + H2O = L-glutaminyl-tRNA(Gln) + L-glutamate + ADP + phosphate + H(+). In terms of biological role, allows the formation of correctly charged Gln-tRNA(Gln) through the transamidation of misacylated Glu-tRNA(Gln) in organisms which lack glutaminyl-tRNA synthetase. The reaction takes place in the presence of glutamine and ATP through an activated gamma-phospho-Glu-tRNA(Gln). This Listeria innocua serovar 6a (strain ATCC BAA-680 / CLIP 11262) protein is Glutamyl-tRNA(Gln) amidotransferase subunit A.